The following is a 128-amino-acid chain: Glycine cleavage system H protein (128 aa).

A Lipoyl-binding domain is found at 23-105; the sequence is IGIVGITWFA…YGEGWILKLE (83 aa). Lysine 64 is modified (N6-lipoyllysine).

This sequence belongs to the GcvH family. The glycine cleavage system is composed of four proteins: P, T, L and H. (R)-lipoate serves as cofactor.

Its function is as follows. The glycine cleavage system catalyzes the degradation of glycine. The H protein shuttles the methylamine group of glycine from the P protein to the T protein. The chain is Glycine cleavage system H protein from Symbiobacterium thermophilum (strain DSM 24528 / JCM 14929 / IAM 14863 / T).